A 243-amino-acid polypeptide reads, in one-letter code: Ribonuclease PH (243 aa).

Phosphate-binding positions include R91 and 129–131; that span reads GTR.

Belongs to the RNase PH family. In terms of assembly, homohexameric ring arranged as a trimer of dimers.

It catalyses the reaction tRNA(n+1) + phosphate = tRNA(n) + a ribonucleoside 5'-diphosphate. Phosphorolytic 3'-5' exoribonuclease that plays an important role in tRNA 3'-end maturation. Removes nucleotide residues following the 3'-CCA terminus of tRNAs; can also add nucleotides to the ends of RNA molecules by using nucleoside diphosphates as substrates, but this may not be physiologically important. Probably plays a role in initiation of 16S rRNA degradation (leading to ribosome degradation) during starvation. The polypeptide is Ribonuclease PH (Burkholderia pseudomallei (strain 668)).